A 139-amino-acid polypeptide reads, in one-letter code: uncharacterized protein (139 aa).

The HTH asnC-type domain maps to 1–62; that stretch reads MDDTDLQILS…NICYEKLNKH (62 aa). Residues 20 to 39 constitute a DNA-binding region (H-T-H motif); the sequence is MVELGKLVGLSSPSAAERVR.

This is an uncharacterized protein from Bacillus subtilis (strain 168).